Here is a 160-residue protein sequence, read N- to C-terminus: Cyclic pyranopterin monophosphate synthase (160 aa).

Residues 77–79 (MCH) and 114–115 (ME) each bind substrate. The active site involves Asp129.

Belongs to the MoaC family. Homohexamer; trimer of dimers.

It catalyses the reaction (8S)-3',8-cyclo-7,8-dihydroguanosine 5'-triphosphate = cyclic pyranopterin phosphate + diphosphate. It functions in the pathway cofactor biosynthesis; molybdopterin biosynthesis. Its function is as follows. Catalyzes the conversion of (8S)-3',8-cyclo-7,8-dihydroguanosine 5'-triphosphate to cyclic pyranopterin monophosphate (cPMP). The chain is Cyclic pyranopterin monophosphate synthase from Listeria monocytogenes serotype 4a (strain HCC23).